Here is a 195-residue protein sequence, read N- to C-terminus: Recombination protein RecR (195 aa).

The segment at 56–71 (CRQCHSFSDDDICPIC) adopts a C4-type zinc-finger fold. Positions 79–174 (SVLCVVETAA…KVTRIAQGIP (96 aa)) constitute a Toprim domain.

It belongs to the RecR family.

May play a role in DNA repair. It seems to be involved in an RecBC-independent recombinational process of DNA repair. It may act with RecF and RecO. The chain is Recombination protein RecR from Psychrobacter sp. (strain PRwf-1).